We begin with the raw amino-acid sequence, 537 residues long: Biotin carboxylase, chloroplastic (537 aa).

The N-terminal 71 residues, 1–71, are a transit peptide targeting the chloroplast; sequence MDASMITNSK…ATSGGLGVTC (71 aa). ATP-binding positions include Lys-188, Lys-230, 236–237, 272–275, and His-280; these read GG and EKFV. Residues 192-389 form the ATP-grasp domain; the sequence is RETMKNAGVP…LIEEQIRVAM (198 aa). Lys-309 is a binding site for hydrogencarbonate. Residues Glu-347 and Glu-360 each contribute to the ATP site. Mg(2+) contacts are provided by Glu-347, Glu-360, and Asn-362. 3 residues coordinate Mn(2+): Glu-347, Glu-360, and Asn-362. Arg-364, Val-367, and Arg-410 together coordinate hydrogencarbonate. The active site involves Arg-364. Arg-410 contributes to the biotin binding site.

As to quaternary structure, acetyl-CoA carboxylase is a heterohexamer composed of biotin carboxyl carrier protein, biotin carboxylase and two subunits each of ACCase subunit alpha and ACCase plastid-coded subunit beta (accD). The cofactor is Mg(2+). Mn(2+) serves as cofactor. In terms of tissue distribution, accumulates in fatty acids synthesizing tissues. Mostly expressed in siliques, developing leaves, and flowers, present in roots and embryos (especially at torpedo stage), and, to a lower extent, in mature leaves.

The protein resides in the plastid. The protein localises to the chloroplast. It carries out the reaction N(6)-biotinyl-L-lysyl-[protein] + hydrogencarbonate + ATP = N(6)-carboxybiotinyl-L-lysyl-[protein] + ADP + phosphate + H(+). It participates in lipid metabolism; malonyl-CoA biosynthesis; malonyl-CoA from acetyl-CoA: step 1/1. Its function is as follows. This protein is a component of the acetyl coenzyme A carboxylase complex; first, biotin carboxylase catalyzes the carboxylation of the carrier protein and then the transcarboxylase transfers the carboxyl group to form malonyl-CoA. In Arabidopsis thaliana (Mouse-ear cress), this protein is Biotin carboxylase, chloroplastic (CAC2).